A 1344-amino-acid polypeptide reads, in one-letter code: Myb-binding protein 1A (1344 aa).

Residues 1 to 24 are disordered; that stretch reads MAEMKSPTKAEPATPAEAAQSDRH. Alanine 2 is subject to N-acetylalanine. Positions 2–580 are interaction with MYB; the sequence is AEMKSPTKAE…WDQMMSTLKE (579 aa). The span at 7–19 shows a compositional bias: low complexity; it reads PTKAEPATPAEAA. N6-acetyllysine occurs at positions 69 and 156. Short sequence motifs (nuclear export signal) lie at residues 238-256 and 261-279; these read SEDN…ANSV and KLPN…ESRF. 2 disordered regions span residues 710–751 and 1146–1344; these read DEKQ…DKDV and QRPK…VQTP. Residues 732–747 show a composition bias toward acidic residues; it reads SDMDSEDGEESEEEDR. Basic and acidic residues predominate over residues 1148-1159; the sequence is PKSEKKNAKDIP. Lysine 1149 participates in a covalent cross-link: Glycyl lysine isopeptide (Lys-Gly) (interchain with G-Cter in SUMO2). Residues 1152 to 1344 form a required for nuclear and nucleolar localization region; the sequence is KKNAKDIPSD…RVASRRVQTP (193 aa). Phosphoserine occurs at positions 1160 and 1164. Positions 1168-1185 are enriched in basic residues; the sequence is TKRKKKGFLPETKKRKKL. Serine 1187 bears the Phosphoserine mark. The segment covering 1188–1202 has biased composition (polar residues); sequence EGTTPEKNAASQQDA. Threonine 1191 is modified (phosphothreonine). A phosphoserine mark is found at serine 1219 and serine 1244. Positions 1249–1258 are enriched in polar residues; that stretch reads NPTLSPSTPA. Threonine 1251 is modified (phosphothreonine). Position 1253 is a phosphoserine (serine 1253). 2 positions are modified to phosphothreonine: threonine 1256 and threonine 1277. Phosphoserine is present on residues serine 1280, serine 1303, and serine 1318. A compositionally biased stretch (low complexity) spans 1317-1329; it reads LSLVSRSPSLLQS. A Citrulline modification is found at arginine 1322. Serine 1323, serine 1325, and serine 1329 each carry phosphoserine.

The protein belongs to the MYBBP1A family. Component of the B-WICH complex, at least composed of SMARCA5/SNF2H, BAZ1B/WSTF, SF3B1, DEK, MYO1C, ERCC6, MYBBP1A and DDX21. Binds to and represses JUN and MYB via the leucine zipper regions present in these proteins. Also binds to and represses PPARGC1A: this interaction is abrogated when PPARGC1A is phosphorylated by MAPK1/ERK. Binds to and stimulates transcription by AHR. Binds to KPNA2. Interacts with CLOCK and CRY1. Post-translationally, citrullinated by PADI4. In terms of tissue distribution, ubiquitously expressed.

The protein localises to the nucleus. It localises to the nucleolus. The protein resides in the cytoplasm. In terms of biological role, may activate or repress transcription via interactions with sequence specific DNA-binding proteins. Repression may be mediated at least in part by histone deacetylase activity (HDAC activity). Acts as a corepressor and in concert with CRY1, represses the transcription of the core circadian clock component PER2. Preferentially binds to dimethylated histone H3 'Lys-9' (H3K9me2) on the PER2 promoter. Has a role in rRNA biogenesis together with PWP1. This chain is Myb-binding protein 1A (Mybbp1a), found in Mus musculus (Mouse).